A 154-amino-acid chain; its full sequence is Protein X (154 aa).

The mitochondrial targeting sequence stretch occupies residues 68–117; it reads PCALRFTSARRMETTVNAHQVLPKVLYKRTLGLSAMSTTDLEAYFKDCLF.

This sequence belongs to the orthohepadnavirus protein X family. As to quaternary structure, may form homodimer. May interact with host CEBPA, CFLAR, CREB1, DDB1, E4F1, HBXIP, HSPD1/HSP60, NFKBIA, POLR2E and SMAD4. Interacts with host SMC5-SMC6 complex and induces its degradation. Interacts with host TRPC4AP; leading to prevent ubiquitination of TRPC4AP. Interacts with host PLSCR1; this interaction promotes ubiquitination and degradation of HBx and impairs HBx-mediated cell proliferation. Post-translationally, a fraction may be phosphorylated in insect cells and HepG2 cells, a human hepatoblastoma cell line. Phosphorylated in vitro by host protein kinase C or mitogen-activated protein kinase. N-acetylated in insect cells.

Its subcellular location is the host cytoplasm. It localises to the host nucleus. The protein resides in the host mitochondrion. Multifunctional protein that plays a role in silencing host antiviral defenses and promoting viral transcription. Does not seem to be essential for HBV infection. May be directly involved in development of cirrhosis and liver cancer (hepatocellular carcinoma). Most of cytosolic activities involve modulation of cytosolic calcium. The effect on apoptosis is controversial depending on the cell types in which the studies have been conducted. May induce apoptosis by localizing in mitochondria and causing loss of mitochondrial membrane potential. May also modulate apoptosis by binding host CFLAR, a key regulator of the death-inducing signaling complex (DISC). Promotes viral transcription by using the host E3 ubiquitin ligase DDB1 to target the SMC5-SMC6 complex to proteasomal degradation. This host complex would otherwise bind to viral episomal DNA, and prevents its transcription. Moderately stimulates transcription of many different viral and cellular transcription elements. Promoters and enhancers stimulated by HBx contain DNA binding sites for NF-kappa-B, AP-1, AP-2, c-EBP, ATF/CREB, or the calcium-activated factor NF-AT. This chain is Protein X, found in Homo sapiens (Human).